We begin with the raw amino-acid sequence, 119 residues long: Virulence protein VsdF (119 aa).

Expressed but non-essential protein, involved in the virulence of Salmonellas. This chain is Virulence protein VsdF (vsdF), found in Salmonella dublin.